Consider the following 433-residue polypeptide: uncharacterized protein (433 aa).

The first 28 residues, Met-1–Gly-28, serve as a signal peptide directing secretion. The Extracellular segment spans residues Phe-29–Gly-274. Positions Gly-235–Ser-250 are enriched in polar residues. The segment at Gly-235–Ala-266 is disordered. Basic and acidic residues predominate over residues Asn-251–Ala-266. A helical transmembrane segment spans residues Val-275 to Leu-295. The Cytoplasmic portion of the chain corresponds to Leu-296–Gly-433. Disordered stretches follow at residues Glu-320–Asp-340 and Lys-413–Gly-433.

As to expression, component of the acid-insoluble and acid-soluble organic matrix of the aragonitic skeleton (at protein level).

It localises to the membrane. This is an uncharacterized protein from Acropora millepora (Staghorn coral).